The chain runs to 1145 residues: Adenylate cyclase type 3 (1145 aa).

Residues 1-79 (MPRNQGFSDP…FKRQRHETLL (79 aa)) lie on the Cytoplasmic side of the membrane. The next 5 membrane-spanning stretches (helical) occupy residues 80-100 (VLVVFAALFDCYVVVMCAVVF), 105-125 (LAPLMVAGFGLVLDIILFVLC), 139-159 (VPYLLWLLISAQIFSYLGLNF), 173-193 (AFFVFSFFITLPLSLSPIVII), and 226-246 (ILANVFLYLCAIIVGIMSYYM). 3 residues coordinate Mg(2+): aspartate 324, isoleucine 325, and aspartate 368. Residues 324-329 (DIVGFT) and 366-368 (LGD) contribute to the ATP site. A helical membrane pass occupies residues 381–401 (EDHAVCSILMGLAMVEAISYV). Residues 402-631 (REKTKTGVDM…RYSVEKEKQS (230 aa)) are Cytoplasmic-facing. Arginine 412 is a binding site for ATP. Lysine 465 is covalently cross-linked (Glycyl lysine isopeptide (Lys-Gly) (interchain with G-Cter in SUMO3)). The tract at residues 504 to 564 (QNGLNGSAVP…DNPSFPNPRR (61 aa)) is disordered. 2 stretches are compositionally biased toward low complexity: residues 516–526 (APASSKPSSPA) and 535–544 (GSAHASGSTS). Serine 524 carries the phosphoserine modification. The residue at position 579 (serine 579) is a Phosphoserine. 3 helical membrane passes run 632–652 (GAAFSCSCVVLFCTAMVEILI), 663–683 (FVVGEVLLLILTICSMAAIFP), and 707–727 (WAMLAIFILVMANVVDMLSCL). N-linked (GlcNAc...) asparagine glycosylation occurs at asparagine 735. Helical transmembrane passes span 753–773 (YNYVAVLSLIATIMLVQVSHM), 774–794 (VKLTLMLLVTGAVTALNLYAW), and 834–854 (LPLVPSKYSMTVMMFVMMLSF). The Cytoplasmic portion of the chain corresponds to 855–1145 (YYFSRHVEKL…TLPHQVVDNP (291 aa)). ATP is bound by residues lysine 976, 1063–1065 (DIW), and 1070–1074 (NVASR). Serine 1077 bears the Phosphoserine; by CaMK2 mark. Lysine 1110 lines the ATP pocket.

Belongs to the adenylyl cyclase class-4/guanylyl cyclase family. Mg(2+) serves as cofactor. It depends on Mn(2+) as a cofactor. N-glycosylated. In terms of processing, rapidly phosphorylated after stimulation by odorants or forskolin. Phosphorylation by CaMK2 at Ser-1077 down-regulates enzyme activity. Post-translationally, sumoylated. Sumoylation is required for targeting of olfactory cilia. Detected in the acrosomal region of epididymal spermatozoa, the acrosomal region of round spermatids and in elongating spermatids. Detected in cilia in the olfactory epithelium (at protein level). Detected in olfactory epithelium neurons. Detected in brain, testis, late pachytene spermatocytes, round spermatids and elongating spermatids.

Its subcellular location is the cell membrane. The protein localises to the cell projection. It is found in the cilium. It localises to the golgi apparatus. The protein resides in the cytoplasm. It carries out the reaction ATP = 3',5'-cyclic AMP + diphosphate. Specifically activated by the G alpha protein GNAL/G(olf) in signaling cascades triggered by odorant receptors. Activated by forskolin. After forskolin treatment, activity is further increased by calcium/calmodulin. In the absence of forskolin, calcium/calmodulin has little effect on enzyme activity. Its function is as follows. Catalyzes the formation of the signaling molecule cAMP in response to G-protein signaling. Participates in signaling cascades triggered by odorant receptors via its function in cAMP biosynthesis: specifically activated by G alpha protein GNAL/G(olf) in olfactory epithelium. Required for the perception of odorants. Required for normal sperm motility and normal male fertility. Plays a role in regulating insulin levels and body fat accumulation in response to a high fat diet. The polypeptide is Adenylate cyclase type 3 (Adcy3) (Mus musculus (Mouse)).